The primary structure comprises 907 residues: Protein translocase subunit SecA (907 aa).

Residues Q87, 105-109, and D510 each bind ATP; that span reads GEGKT. Zn(2+) is bound by residues C892, C894, C903, and H904.

It belongs to the SecA family. In terms of assembly, monomer and homodimer. Part of the essential Sec protein translocation apparatus which comprises SecA, SecYEG and auxiliary proteins SecDF-YajC and YidC. It depends on Zn(2+) as a cofactor.

It is found in the cell inner membrane. The protein resides in the cytoplasm. The catalysed reaction is ATP + H2O + cellular proteinSide 1 = ADP + phosphate + cellular proteinSide 2.. Its function is as follows. Part of the Sec protein translocase complex. Interacts with the SecYEG preprotein conducting channel. Has a central role in coupling the hydrolysis of ATP to the transfer of proteins into and across the cell membrane, serving both as a receptor for the preprotein-SecB complex and as an ATP-driven molecular motor driving the stepwise translocation of polypeptide chains across the membrane. This Acinetobacter baumannii (strain ACICU) protein is Protein translocase subunit SecA.